A 194-amino-acid chain; its full sequence is Xanthine phosphoribosyltransferase (194 aa).

Xanthine contacts are provided by Leu-20 and Asn-27. 128-132 (ANGQA) contributes to the 5-phospho-alpha-D-ribose 1-diphosphate binding site. Residue Lys-156 coordinates xanthine.

Belongs to the purine/pyrimidine phosphoribosyltransferase family. Xpt subfamily. In terms of assembly, homodimer.

Its subcellular location is the cytoplasm. It carries out the reaction XMP + diphosphate = xanthine + 5-phospho-alpha-D-ribose 1-diphosphate. It functions in the pathway purine metabolism; XMP biosynthesis via salvage pathway; XMP from xanthine: step 1/1. In terms of biological role, converts the preformed base xanthine, a product of nucleic acid breakdown, to xanthosine 5'-monophosphate (XMP), so it can be reused for RNA or DNA synthesis. The protein is Xanthine phosphoribosyltransferase of Bacillus licheniformis (strain ATCC 14580 / DSM 13 / JCM 2505 / CCUG 7422 / NBRC 12200 / NCIMB 9375 / NCTC 10341 / NRRL NRS-1264 / Gibson 46).